The primary structure comprises 412 residues: Small ribosomal subunit protein mL103 (rPPR7) (412 aa).

The transit peptide at 1 to 14 (MASSRISLRLVRRF) directs the protein to the mitochondrion. Residues 21–37 (GTTTAPSSGKISVSKAK) are compositionally biased toward polar residues. The segment at 21 to 43 (GTTTAPSSGKISVSKAKSTLRKE) is disordered. 8 PPR repeats span residues 101–135 (EEPF…GTPR), 136–166 (SAVS…IPQR), 173–207 (DKIS…GMEV), 208–242 (TTIA…GCEL), 243–276 (DNAA…GLKP), 277–311 (DTIS…NCAP), 312–346 (NAAT…HKIP), and 347–377 (DFNT…VKKK).

This sequence belongs to the PPR family. P subfamily. In terms of assembly, component of the mitochondrial ribosome small subunit.

It localises to the mitochondrion. This Arabidopsis thaliana (Mouse-ear cress) protein is Small ribosomal subunit protein mL103 (rPPR7).